We begin with the raw amino-acid sequence, 184 residues long: MYLMKDITRDGAKVLRETAKPVTFPLSDEDKQLAHDMMAYLVISQDEEQNEKYHLRPGVGLAAPQVGQSKAMAAVLVPGDDNEILFKEVLINPRIISNSVQHAALAEGEGCLSVDKDVPGYVVRADRITISYQNEAGEHKKIRLKNYPAIVCQHEIDHLNGVLFYDHINKEHPFTIDPDAVIIK.

Residues cysteine 111 and histidine 154 each contribute to the Fe cation site. Residue glutamate 155 is part of the active site. Residue histidine 158 participates in Fe cation binding.

Belongs to the polypeptide deformylase family. Fe(2+) is required as a cofactor.

The catalysed reaction is N-terminal N-formyl-L-methionyl-[peptide] + H2O = N-terminal L-methionyl-[peptide] + formate. Removes the formyl group from the N-terminal Met of newly synthesized proteins. Requires at least a dipeptide for an efficient rate of reaction. N-terminal L-methionine is a prerequisite for activity but the enzyme has broad specificity at other positions. This chain is Peptide deformylase, found in Lacticaseibacillus casei (strain BL23) (Lactobacillus casei).